The primary structure comprises 284 residues: Pantothenate synthetase (284 aa).

An ATP-binding site is contributed by 30-37; the sequence is MGNLHDGH. The active-site Proton donor is His-37. Gln-61 provides a ligand contact to (R)-pantoate. Gln-61 is a binding site for beta-alanine. Residue 149–152 participates in ATP binding; that stretch reads GEKD. Gln-155 serves as a coordination point for (R)-pantoate. ATP-binding positions include Ile-178 and 186–189; that span reads LSSR.

It belongs to the pantothenate synthetase family. As to quaternary structure, homodimer.

The protein localises to the cytoplasm. It carries out the reaction (R)-pantoate + beta-alanine + ATP = (R)-pantothenate + AMP + diphosphate + H(+). It participates in cofactor biosynthesis; (R)-pantothenate biosynthesis; (R)-pantothenate from (R)-pantoate and beta-alanine: step 1/1. Functionally, catalyzes the condensation of pantoate with beta-alanine in an ATP-dependent reaction via a pantoyl-adenylate intermediate. This chain is Pantothenate synthetase, found in Salmonella choleraesuis (strain SC-B67).